The primary structure comprises 269 residues: Diadenylate cyclase (269 aa).

In terms of domain architecture, DAC spans 109 to 266 (RSGIYDLFAN…GGKMILEIDP (158 aa)).

It belongs to the adenylate cyclase family. DacZ subfamily. Mn(2+) serves as cofactor.

It catalyses the reaction 2 ATP = 3',3'-c-di-AMP + 2 diphosphate. Functionally, diadenylate cyclase that catalyzes the condensation of 2 ATP molecules into cyclic di-AMP (c-di-AMP). c-di-AMP is a second messenger for intracellular signal transduction involved in the control of important regulatory processes such as osmoregulation. Is essential for H.volcanii. Overexpression of DacZ leads to cell death, suggesting the need for tight regulation of c-di-AMP levels. Cannot use GTP as substrate. This Haloferax volcanii (strain ATCC 29605 / DSM 3757 / JCM 8879 / NBRC 14742 / NCIMB 2012 / VKM B-1768 / DS2) (Halobacterium volcanii) protein is Diadenylate cyclase.